The primary structure comprises 206 residues: Large ribosomal subunit protein uL4 (206 aa).

Positions 47–79 (GTKGQKNRSAVRGGGAKPWAQKGSGRARAGTSR) are disordered. Residues 69–79 (GSGRARAGTSR) are compositionally biased toward low complexity.

Belongs to the universal ribosomal protein uL4 family. As to quaternary structure, part of the 50S ribosomal subunit.

In terms of biological role, one of the primary rRNA binding proteins, this protein initially binds near the 5'-end of the 23S rRNA. It is important during the early stages of 50S assembly. It makes multiple contacts with different domains of the 23S rRNA in the assembled 50S subunit and ribosome. Its function is as follows. Forms part of the polypeptide exit tunnel. The polypeptide is Large ribosomal subunit protein uL4 (Hydrogenovibrio crunogenus (strain DSM 25203 / XCL-2) (Thiomicrospira crunogena)).